A 130-amino-acid chain; its full sequence is Phosphoribosyl-AMP cyclohydrolase 1 (130 aa).

A Mg(2+)-binding site is contributed by Asp77. Cys78 is a binding site for Zn(2+). Mg(2+) contacts are provided by Asp79 and Asp81. 2 residues coordinate Zn(2+): Cys95 and Cys102.

The protein belongs to the PRA-CH family. Homodimer. Requires Mg(2+) as cofactor. Zn(2+) serves as cofactor.

The protein resides in the cytoplasm. The catalysed reaction is 1-(5-phospho-beta-D-ribosyl)-5'-AMP + H2O = 1-(5-phospho-beta-D-ribosyl)-5-[(5-phospho-beta-D-ribosylamino)methylideneamino]imidazole-4-carboxamide. It functions in the pathway amino-acid biosynthesis; L-histidine biosynthesis; L-histidine from 5-phospho-alpha-D-ribose 1-diphosphate: step 3/9. Catalyzes the hydrolysis of the adenine ring of phosphoribosyl-AMP. The polypeptide is Phosphoribosyl-AMP cyclohydrolase 1 (Pseudomonas fluorescens (strain ATCC BAA-477 / NRRL B-23932 / Pf-5)).